Here is a 345-residue protein sequence, read N- to C-terminus: Transcription factor STKL1 (345 aa).

The disordered stretch occupies residues methionine 1–serine 145. Residues serine 11–isoleucine 22 show a composition bias toward low complexity. Residues serine 23–glutamate 32 are compositionally biased toward basic and acidic residues. Residues valine 37 to proline 46 show a composition bias toward polar residues. Serine 105 carries the post-translational modification Phosphoserine. Residues arginine 114–lysine 137 show a composition bias toward basic and acidic residues.

The protein belongs to the GeBP family. Expressed strongly in leaves and flowers, weakly in roots, and very weakly in stems.

The protein resides in the nucleus. Functionally, transcription repressor that binds DNA in a sequence-specific manner, 5'-GCCT-3', to regulate the expression of PGR. Acts as a modulatory component for the glucose-triggered developmental leaf growth process. In Arabidopsis thaliana (Mouse-ear cress), this protein is Transcription factor STKL1.